We begin with the raw amino-acid sequence, 418 residues long: S-adenosylmethionine synthase (418 aa).

Residue histidine 16 participates in ATP binding. Residue aspartate 18 coordinates Mg(2+). Glutamate 44 is a binding site for K(+). L-methionine is bound by residues glutamate 57 and glutamine 100. The interval 100 to 110 (QSPDIAQGVDS) is flexible loop. ATP contacts are provided by residues 174-176 (DGK), aspartate 259, 265-266 (RK), alanine 282, and lysine 286. L-methionine is bound at residue aspartate 259. Lysine 290 provides a ligand contact to L-methionine.

Belongs to the AdoMet synthase family. Homotetramer; dimer of dimers. Mg(2+) serves as cofactor. It depends on K(+) as a cofactor.

It is found in the cytoplasm. The enzyme catalyses L-methionine + ATP + H2O = S-adenosyl-L-methionine + phosphate + diphosphate. It participates in amino-acid biosynthesis; S-adenosyl-L-methionine biosynthesis; S-adenosyl-L-methionine from L-methionine: step 1/1. Functionally, catalyzes the formation of S-adenosylmethionine (AdoMet) from methionine and ATP. The overall synthetic reaction is composed of two sequential steps, AdoMet formation and the subsequent tripolyphosphate hydrolysis which occurs prior to release of AdoMet from the enzyme. The sequence is that of S-adenosylmethionine synthase from Acaryochloris marina (strain MBIC 11017).